The following is a 594-amino-acid chain: Protein FAM200C (594 aa).

The protein is Protein FAM200C of Homo sapiens (Human).